Reading from the N-terminus, the 481-residue chain is Transmembrane protein 39A (481 aa).

A run of 8 helical transmembrane segments spans residues 74 to 94 (LFETLLLLYLLVALLVQYINI), 109 to 129 (STSLNFHLMDAHLAVFIAVML), 150 to 170 (LCYVLLLVVRVCVLTLCGWVL), 182 to 202 (SVLKLLFLGYPFGVYVPLCCL), 278 to 298 (EVLFNSLLSAYYVAFLPLCFV), 313 to 333 (LIMVWINAFVMLMSHLLPPHY), 411 to 431 (LLNVLIGIECSVVVYQLYSLL), and 437 to 457 (NHTLSLGLILVCNYYVLFKLL).

This sequence belongs to the TMEM39 family.

It is found in the endoplasmic reticulum membrane. Its function is as follows. Regulates autophagy by controlling the spatial distribution and levels of the intracellular phosphatidylinositol 4-phosphate (PtdIns(4)P) pools. Modulates (PtdIns(4)P) levels by regulating the ER-to-Golgi trafficking of the phosphatidylinositide phosphatase SACM1L. This Danio rerio (Zebrafish) protein is Transmembrane protein 39A (tmem39a).